Here is a 515-residue protein sequence, read N- to C-terminus: 2-isopropylmalate synthase (515 aa).

In terms of domain architecture, Pyruvate carboxyltransferase spans 4–266 (IKFFDTTLRD…ETRLNLQEIK (263 aa)). Mn(2+) contacts are provided by aspartate 13, histidine 201, histidine 203, and asparagine 237. Positions 391–515 (QLSSIQVQYG…RAENEKVATS (125 aa)) are regulatory domain.

This sequence belongs to the alpha-IPM synthase/homocitrate synthase family. LeuA type 1 subfamily. As to quaternary structure, homodimer. The cofactor is Mn(2+).

It is found in the cytoplasm. It carries out the reaction 3-methyl-2-oxobutanoate + acetyl-CoA + H2O = (2S)-2-isopropylmalate + CoA + H(+). The protein operates within amino-acid biosynthesis; L-leucine biosynthesis; L-leucine from 3-methyl-2-oxobutanoate: step 1/4. Functionally, catalyzes the condensation of the acetyl group of acetyl-CoA with 3-methyl-2-oxobutanoate (2-ketoisovalerate) to form 3-carboxy-3-hydroxy-4-methylpentanoate (2-isopropylmalate). The protein is 2-isopropylmalate synthase of Geobacillus stearothermophilus (Bacillus stearothermophilus).